Consider the following 480-residue polypeptide: MNFETVIGLEVHVELNTNSKIFSPTSAHFGNDQNANTNVIDWSFPGVLPVLNKGVVDAGIKAALALNMDIHKKMHFDRKNYFYPDNPKAYQISQFDEPIGYNGWIEVKLEDGTTKKIGIERAHLEEDAGKNTHGTDGYSYVDLNRQGVPLIEIVSEADMRSPEEAYAYLTALKEVIQYAGISDVKMEEGSMRVDANISLRPYGQEKFGTKTELKNLNSFSNVRKGLEYEIQRQAEILRSGGQIRQETRRYDEANKTTILMRVKEGAADYRYFPEPDLPLFEISDEWIEEMRTELPEFPKERRARYVSDLGLSDYDANQLTANKVTSDFFEKAVALGGDAKQVSNWLQGEVAQFLNAEGKTLEQIELTPENLVEMITIIEDGTISSKIAKKVFVHLAKNGGGAREYVEKAGMVQISDPAILIPIIHQVFADNEAAVADFKSGKRNADKAFTGFLMKATKGQANPQVALKLLAQELAKLKEN.

This sequence belongs to the GatB/GatE family. GatB subfamily. Heterotrimer of A, B and C subunits.

It catalyses the reaction L-glutamyl-tRNA(Gln) + L-glutamine + ATP + H2O = L-glutaminyl-tRNA(Gln) + L-glutamate + ADP + phosphate + H(+). The enzyme catalyses L-aspartyl-tRNA(Asn) + L-glutamine + ATP + H2O = L-asparaginyl-tRNA(Asn) + L-glutamate + ADP + phosphate + 2 H(+). Its function is as follows. Allows the formation of correctly charged Asn-tRNA(Asn) or Gln-tRNA(Gln) through the transamidation of misacylated Asp-tRNA(Asn) or Glu-tRNA(Gln) in organisms which lack either or both of asparaginyl-tRNA or glutaminyl-tRNA synthetases. The reaction takes place in the presence of glutamine and ATP through an activated phospho-Asp-tRNA(Asn) or phospho-Glu-tRNA(Gln). This chain is Aspartyl/glutamyl-tRNA(Asn/Gln) amidotransferase subunit B, found in Streptococcus pneumoniae (strain P1031).